The primary structure comprises 311 residues: Thymidylate synthase (311 aa).

DUMP contacts are provided by residues R28 and 172 to 173; that span reads RR. The active-site Nucleophile is C192. Residues 213–216, N224, and 254–256 contribute to the dUMP site; these read RSCD and HLY. A (6R)-5,10-methylene-5,6,7,8-tetrahydrofolate-binding site is contributed by D216. A310 provides a ligand contact to (6R)-5,10-methylene-5,6,7,8-tetrahydrofolate.

Belongs to the thymidylate synthase family. Bacterial-type ThyA subfamily. Homodimer.

It is found in the cytoplasm. It carries out the reaction dUMP + (6R)-5,10-methylene-5,6,7,8-tetrahydrofolate = 7,8-dihydrofolate + dTMP. The protein operates within pyrimidine metabolism; dTTP biosynthesis. In terms of biological role, catalyzes the reductive methylation of 2'-deoxyuridine-5'-monophosphate (dUMP) to 2'-deoxythymidine-5'-monophosphate (dTMP) while utilizing 5,10-methylenetetrahydrofolate (mTHF) as the methyl donor and reductant in the reaction, yielding dihydrofolate (DHF) as a by-product. This enzymatic reaction provides an intracellular de novo source of dTMP, an essential precursor for DNA biosynthesis. The protein is Thymidylate synthase of Sphingopyxis alaskensis (strain DSM 13593 / LMG 18877 / RB2256) (Sphingomonas alaskensis).